The chain runs to 348 residues: Calcium/calmodulin-dependent protein kinase type 1 (348 aa).

The short motif at 7-22 is the Nuclear localization signal 1 element; it reads RDGSGPAPNATIREKY. Positions 22–278 constitute a Protein kinase domain; it reads YDFRDVLGTG…CQDALSHPWI (257 aa). Residues 28-36 and K52 each bind ATP; that span reads LGTGAFSKV. The short motif at 71–78 is the Nuclear localization signal 2 element; that stretch reads KVLRKLRH. D144 acts as the Proton acceptor in catalysis. The residue at position 179 (T179) is a Phosphothreonine; by ckk-1. The segment at 278–318 is autoinhibitory domain; sequence ISGNTAYTHDIHGTVAVHLKKSLAKRNWKKAYNAAAAIRQL. The Nuclear export sequence motif lies at 288–294; it reads IHGTVAV. The Nuclear localization signal 3 signature appears at 297–307; sequence KKSLAKRNWKK. The segment at 298-319 is calmodulin-binding; that stretch reads KSLAKRNWKKAYNAAAAIRQLQ. Polar residues predominate over residues 327–338; sequence SNRLQKQASQQQ. A disordered region spans residues 327 to 348; it reads SNRLQKQASQQQPEPPTPAFHA. Positions 339–348 are enriched in pro residues; that stretch reads PEPPTPAFHA.

This sequence belongs to the protein kinase superfamily. CAMK Ser/Thr protein kinase family. CaMK subfamily. In terms of assembly, interacts with importin ima-3; affinity for ima-3 is increased in the presence of Ca(2+) and calmodulin and leads to increased nuclear accumulation of cmk-1 in FLP neurons upon prolonged heat activation. Mg(2+) is required as a cofactor. Post-translationally, phosphorylation at Thr-179 can promote both nuclear export and import, sustaining nucleocytoplasmic shuttling. As to expression, expressed in head and tail neurons and vulval muscles. Throughout the nervous system. Detected in neurites and neuronal cell bodies. Expressed in the mechanosensory neurons, AVM and ALM, and in the interneurons, AVA, AVB and AVD. Expressed in the right and left ASE neurons where it functions cell-autonomously to control salt-avoidance learning. Expressed in FLP and AFD thermosensory neurons.

It is found in the nucleus. Its subcellular location is the cytoplasm. The enzyme catalyses L-seryl-[protein] + ATP = O-phospho-L-seryl-[protein] + ADP + H(+). The catalysed reaction is L-threonyl-[protein] + ATP = O-phospho-L-threonyl-[protein] + ADP + H(+). With respect to regulation, activated by Ca(2+)/calmodulin. Binding of calmodulin results in a conformational change that generates functional binding sites for both substrate and ATP, and thus relieves autoinhibition and lowers the Km of substrate binding. Must be phosphorylated by ckk-1 to be maximally active but this does not appear to be required for activity in AFD neurons. Calcium/calmodulin-dependent protein kinase that operates in the calcium-triggered CaMKK-CaMK1 signaling cascade which results in transcriptional activation. Transcriptional activation occurs at least in part through phosphorylation of crh-1. Regulates gene expression, sensory morphology, and function of the AFD thermosensory neurons. Involved in long-term adaptation of AFD neurons to temperatures warmer than the initial acclimatized cultivation temperature. Acts in the FLP thermal nociceptors to moderate the responsiveness to noxious heat and controls neuropeptide release from FLP neurons in response to temperature elevations. Regulates the dauer decision, the decision of the larvae to enter into the alternative stress-resistant and long-lived dauer developmental stage, based on the feeding state, primarily in the AWC sensory neurons. Acts non cell-autonomously in the AWC neurons to regulate expression of the daf-28 insulin-like peptide and cell-autonomously in the ASI sensory neurons to regulate expression of the growth promoting daf-7 in a food-regulated manner. Plays a role in memory-based thermal response of an individual AFD neuron cell. Influences habituation and sensitivity to repeated mechanosensory stimuli. Involved in chemotaxis response in AWC neurons to attractant 2-heptanone, a volatile organic compound emitted by the nematode pathogenic bacterium B.nematocida B16. Acts in the ASE salt-sensing neurons to promote a type of aversive gustatory-associated learning called salt-avoidance learning via regulation of crh-1 signaling and the promotion of long-term memory formation, but is not involved in salt attraction. Represses transcription of glutamate receptor glr-1 in the nucleus basally and in response to changes in synaptic activity. The protein is Calcium/calmodulin-dependent protein kinase type 1 of Caenorhabditis elegans.